Consider the following 2617-residue polypeptide: Non-reducing polyketide synthase epaA (2617 aa).

The N-terminal acylcarrier protein transacylase domain (SAT) stretch occupies residues 95-231 (PNILLSPMVV…AARSISSLQQ (137 aa)). The active-site Nucleophile; for transacylase activity is C132. H250 acts as the Proton donor/acceptor; for transacylase activity in catalysis. The Ketosynthase family 3 (KS3) domain maps to 372–790 (PNEIAVIGMS…GSNASMVVAQ (419 aa)). Active-site for beta-ketoacyl synthase activity residues include C539, H674, and H713. The interval 902-1193 (FGGQISNYVG…ITSMASRALG (292 aa)) is malonyl-CoA:ACP transacylase (MAT) domain. The N-terminal hotdog fold stretch occupies residues 1282-1413 (PKTLWSLIEA…GKLAFLSGQD (132 aa)). Residues 1282 to 1591 (PKTLWSLIEA…YHKVAKASMS (310 aa)) enclose the PKS/mFAS DH domain. The product template (PT) domain stretch occupies residues 1310–1589 (LVSGHVIANT…INYHKVAKAS (280 aa)). Residue H1314 is the Proton acceptor; for dehydratase activity of the active site. Residues 1443-1591 (ADDIIQGRNI…YHKVAKASMS (149 aa)) are C-terminal hotdog fold. D1499 acts as the Proton donor; for dehydratase activity in catalysis. The segment at 1600–1651 (TEAAPSSSTRAHPTSSSSPRLPGPSVPEDKSQNETQPAGTNAVAKKKSEKSA) is disordered. The segment covering 1602-1619 (AAPSSSTRAHPTSSSSPR) has biased composition (low complexity). Residues 1653 to 1727 (QNVLEKTRAL…GLVEYVQSAV (75 aa)) form the Carrier domain. An O-(pantetheine 4'-phosphoryl)serine modification is found at S1687. A disordered region spans residues 1728–1799 (GVPTNGDEPD…PAMPPASSKT (72 aa)). Low complexity predominate over residues 1750–1766 (LAPSPSSSSSSTNLTED). Polar residues predominate over residues 1769–1785 (LDQAETTTNISSYPGQT). Positions 1970-2158 (DSLLNKLSYR…VGYGQVDWTD (189 aa)) are methyltransferase domain. The NADPH-binding (R) domain stretch occupies residues 2240–2485 (ITGATGSLGV…LCWTPVNDVA (246 aa)).

Pantetheine 4'-phosphate serves as cofactor.

The protein operates within secondary metabolite biosynthesis. In terms of biological role, non-reducing polyketide synthase; part of the gene cluster that mediates the biosynthesis of nigerpyrone and its derivatives carbonarone A and pestalamide A. The biosynthesis pathway begins with the polyketide assembly by epaA to form phenylacetyl triketide precursor from successive condensation of two malonyl-CoA, presumably with one phenylacetyl-CoA starter unit produced by the phenylacetyl-CoA ligase epaB. For the nigerpyrone biosynthesis, the reactive polyketide chain is released as an aldehyde through the R-domain. A nonenzymatic cyclization and dehydration may create nigerpyrone. For the biosynthesis of carbonarone A and pestalamide A, an extra methyl group is added through the C-methyltransferase domain. Several further steps involving the dehydrogenase orf1, the cytochrome P450 monooxygenase orf2 and the FAD-dependent monooxygenase orf3 are required to form a carbonarone A precursor which is converted to carbonarone A via cyclization. The O-acetyltransferase epaC could catalyze the transfer of 2-methylsuccinyl-CoA, a common intermediate in the ethylmalonyl-CoA pathway, to generate the final product pestalamide A. This chain is Non-reducing polyketide synthase epaA, found in Aspergillus niger (strain ATCC MYA-4892 / CBS 513.88 / FGSC A1513).